A 480-amino-acid chain; its full sequence is Aspartyl/glutamyl-tRNA(Asn/Gln) amidotransferase subunit B (480 aa).

It belongs to the GatB/GatE family. GatB subfamily. In terms of assembly, heterotrimer of A, B and C subunits.

The catalysed reaction is L-glutamyl-tRNA(Gln) + L-glutamine + ATP + H2O = L-glutaminyl-tRNA(Gln) + L-glutamate + ADP + phosphate + H(+). It carries out the reaction L-aspartyl-tRNA(Asn) + L-glutamine + ATP + H2O = L-asparaginyl-tRNA(Asn) + L-glutamate + ADP + phosphate + 2 H(+). In terms of biological role, allows the formation of correctly charged Asn-tRNA(Asn) or Gln-tRNA(Gln) through the transamidation of misacylated Asp-tRNA(Asn) or Glu-tRNA(Gln) in organisms which lack either or both of asparaginyl-tRNA or glutaminyl-tRNA synthetases. The reaction takes place in the presence of glutamine and ATP through an activated phospho-Asp-tRNA(Asn) or phospho-Glu-tRNA(Gln). This chain is Aspartyl/glutamyl-tRNA(Asn/Gln) amidotransferase subunit B, found in Streptococcus pneumoniae serotype 4 (strain ATCC BAA-334 / TIGR4).